A 94-amino-acid polypeptide reads, in one-letter code: Putative septation protein SpoVG (94 aa).

It belongs to the SpoVG family.

Functionally, could be involved in septation. The protein is Putative septation protein SpoVG of Acholeplasma laidlawii (strain PG-8A).